The chain runs to 337 residues: Ornithine carbamoyltransferase, catabolic (337 aa).

Residues 57-60 (STRT), Gln-84, Arg-108, and 135-138 (HPTQ) contribute to the carbamoyl phosphate site. Residues Asn-167, Asp-231, and 235–236 (SM) each bind L-ornithine. Carbamoyl phosphate contacts are provided by residues 272–273 (CL) and Arg-317.

Belongs to the aspartate/ornithine carbamoyltransferase superfamily. OTCase family.

Its subcellular location is the cytoplasm. The enzyme catalyses carbamoyl phosphate + L-ornithine = L-citrulline + phosphate + H(+). The protein operates within amino-acid degradation; L-arginine degradation via ADI pathway; carbamoyl phosphate from L-arginine: step 2/2. In terms of biological role, reversibly catalyzes the transfer of the carbamoyl group from carbamoyl phosphate (CP) to the N(epsilon) atom of ornithine (ORN) to produce L-citrulline. The chain is Ornithine carbamoyltransferase, catabolic (arcB) from Streptococcus agalactiae.